We begin with the raw amino-acid sequence, 126 residues long: Autophagy-related protein 8-like protein DDB_G0290491 (126 aa).

G123 is lipidated: Phosphatidylethanolamine amidated glycine. Positions 124–126 are cleaved as a propeptide — removed in mature form; the sequence is SDI.

It belongs to the ATG8 family.

Its subcellular location is the membrane. This is Autophagy-related protein 8-like protein DDB_G0290491 from Dictyostelium discoideum (Social amoeba).